Consider the following 546-residue polypeptide: MASASSGPAAAGFSPLDSGVPAGTAASGIKRGTVSEGPYASLMPVKKIGHRSVDSSGETTYKKTTSSALKGAIQLGITHTVGSLSTKPERDVLMQDFYVVESIFFPSEGSNLTPAHHYNDFRFKTYAPVAFRYFRELFGIRPDDYLYSLCSEPLIELSNSGASGSLFYVSSDDEFIIKTVQHKEAEFLQKLLPGYYMNLNQNPRTLLPKFYGLYCVQAGGKNIRIVVMNNLLPRSVKMHMKYDLKGSTYKRRASQKEREKTLPTFKDLDFLQDIPDGLFLDADMYSALCKTLQRDCLVLQSFKIMDYSLLMSIHNMDHAQREPMNSETQYSIDTRRPAPQKALYSTAMESIQGEARRGGTVETEDHMGGIPARNNKGERLLLYIGIIDILQSYRFVKKLEHSWKALVHDGDTVSVHRPGFYAERFQRFMCNTVFKKIPLKPSPTKKFRSGPSFSRRSGPSGNSCTPSQPTASGEHKAQVTTKAEVEPDIHLGRPDVLPQTPPLEEISEGSPVPGPSFSPAVGQPLQILNLSSTLEKLDVAESELTH.

Positions Thr-65–Val-433 constitute a PIPK domain. Lys-87 participates in a covalent cross-link: Glycyl lysine isopeptide (Lys-Gly) (interchain with G-Cter in ubiquitin). Residues Pro-441 to Gly-522 are disordered. Positions Ser-449–Gly-461 are enriched in low complexity. Over residues Asn-462–Ala-471 the composition is skewed to polar residues. The segment covering Gly-473–Arg-493 has biased composition (basic and acidic residues).

In terms of assembly, interacts with RAC1. Interacts with TUT1. Forms a complex with CDH1/E-cadherin, CTNNB1/beta-catenin and CTNND1 at the plasma membrane upon calcium stimulation. Found in a ternary complex with IRS1 and DGKZ in the absence of insulin stimulation. Interacts with DGKZ. Interacts with PIP4K2C; the interaction inhibits PIP5K1A kinase activity.

The protein resides in the cell membrane. The protein localises to the cytoplasm. It is found in the nucleus. It localises to the nucleus speckle. Its subcellular location is the cell projection. The protein resides in the ruffle. The protein localises to the lamellipodium. It carries out the reaction a 1,2-diacyl-sn-glycero-3-phospho-(1D-myo-inositol 4-phosphate) + ATP = a 1,2-diacyl-sn-glycero-3-phospho-(1D-myo-inositol-4,5-bisphosphate) + ADP + H(+). It catalyses the reaction 1-octadecanoyl-2-(5Z,8Z,11Z,14Z)-eicosatetraenoyl-sn-glycero-3-phospho-1D-myo-inositol 4-phosphate + ATP = 1-octadecanoyl-2-(5Z,8Z,11Z,14Z)-eicosatetraenoyl-sn-glycero-3-phospho-1D-myo-inositol 4,5-bisphosphate + ADP + H(+). The enzyme catalyses 1,2-dihexadecanoyl-sn-glycero-3-phospho-(1D-myo-inositol-4-phosphate) + ATP = 1,2-dihexadecanoyl-sn-glycero-3-phospho-(1D-myo-inositol-4,5-bisphosphate) + ADP + H(+). The catalysed reaction is 1-octadecanoyl-2-(9Z)-octadecenoyl-sn-glycero-3-phospho-1D-myo-inositol 4-phosphate + ATP = 1-octadecanoyl-2-(9Z)-octadecenoyl-sn-glycero-3-phospho-1D-myo-inositol 4,5-bisphosphate + ADP + H(+). It carries out the reaction 1-octadecanoyl-2-(9Z)-octadecenoyl-sn-glycero-3-phospho-1D-myo-inositol + ATP = 1-octadecanoyl-2-(9Z)-octadecenoyl-sn-glycero-3-phospho-1D-myo-inositol 5-phosphate + ADP + H(+). It catalyses the reaction 1-octadecanoyl-2-(9Z,12Z)-octadecadienoyl-sn-glycero-3-phospho-1D-myo-inositol + ATP = 1-octadecanoyl-2-(9Z,12Z)-octadecadienoyl-sn-glycero-3-phospho-1D-myo-inositol 5-phosphate + ADP + H(+). The enzyme catalyses 1-octadecanoyl-2-(5Z,8Z,11Z,14Z-eicosatetraenoyl)-sn-glycero-3-phospho-(1D-myo-inositol) + ATP = 1-octadecanoyl-2-(5Z,8Z,11Z,14Z)-eicosatetraenoyl-sn-glycero-3-phospho-1D-myo-inositol 5-phosphate + ADP + H(+). The catalysed reaction is 1,2-di-(9Z,12Z)-octadecadienoyl-sn-glycero-3-phospho-1D-myo-inositol + ATP = 1,2-di(9Z,12Z)-octadecadienoyl-sn-glycero-3-phospho-1D-myo-inositol 5-phosphate + ADP + H(+). Its function is as follows. Catalyzes the phosphorylation of phosphatidylinositol 4-phosphate (PtdIns(4)P/PI4P) to form phosphatidylinositol 4,5-bisphosphate (PtdIns(4,5)P2/PIP2), a lipid second messenger that regulates several cellular processes such as signal transduction, vesicle trafficking, actin cytoskeleton dynamics, cell adhesion, and cell motility. PtdIns(4,5)P2 can directly act as a second messenger or can be utilized as a precursor to generate other second messengers: inositol 1,4,5-trisphosphate (IP3), diacylglycerol (DAG) or phosphatidylinositol-3,4,5-trisphosphate (PtdIns(3,4,5)P3/PIP3). PIP5K1A-mediated phosphorylation of PtdIns(4)P is the predominant pathway for PtdIns(4,5)P2 synthesis. Can also use phosphatidylinositol (PtdIns) as substrate in vitro. Together with PIP5K1C, is required for phagocytosis, both enzymes regulating different types of actin remodeling at sequential steps. Promotes particle ingestion by activating the WAS GTPase-binding protein that induces Arp2/3 dependent actin polymerization at the nascent phagocytic cup. Together with PIP5K1B, is required, after stimulation by G-protein coupled receptors, for the synthesis of IP3 that will induce stable platelet adhesion. Recruited to the plasma membrane by the E-cadherin/beta-catenin complex where it provides the substrate PtdIns(4,5)P2 for the production of PtdIns(3,4,5)P3, IP3 and DAG, that will mobilize internal calcium and drive keratinocyte differentiation. Positively regulates insulin-induced translocation of SLC2A4 to the cell membrane in adipocytes. Together with PIP5K1C has a role during embryogenesis. Independently of its catalytic activity, is required for membrane ruffling formation, actin organization and focal adhesion formation during directional cell migration by controlling integrin-induced translocation of the small GTPase RAC1 to the plasma membrane. Also functions in the nucleus where it acts as an activator of TUT1 adenylyltransferase activity in nuclear speckles, thereby regulating mRNA polyadenylation of a select set of mRNAs. In Rattus norvegicus (Rat), this protein is Phosphatidylinositol 4-phosphate 5-kinase type-1 alpha.